A 166-amino-acid chain; its full sequence is Putative transmembrane protein encoded by LINC00477 (166 aa).

An N-linked (GlcNAc...) asparagine glycan is attached at N7. Transmembrane regions (helical) follow at residues 15 to 35 (VSSF…FFLC), 41 to 61 (MTGC…VLGP), and 63 to 83 (PMGM…RFLG). The segment at 127–166 (LPVPHPPSPLSKCPQHPRPRRTKGPGLRKLWGPGPPFFPS) is disordered.

The protein localises to the membrane. The chain is Putative transmembrane protein encoded by LINC00477 (LINC00477) from Homo sapiens (Human).